We begin with the raw amino-acid sequence, 920 residues long: MAASVENRQFRHEPGLSAAGVVRSFSPNHRRSDSPIRNCNYPAAAREFMTPKKLPPETYDTSDDEEDEADYRDAIKKSNSELESSVFDPRDQGTADQWIERNPSMVRLTGKHPFNSEPPLNKLMQHGFITPDPLHYVRNHGPVPNATWEDWTVEICGLVKRPARFSMTQLVNEFPSREFPVTLVCAGNRRKEQNLTKQTIGFNWGAAGISTSVWKGVPLVHILKRCGIYSRKKGALNVCFEGAEDLPGGGGSKYGTSIKIEMAMDPARDIILAYMQNGEKLSPDHGFPVRMIIPGFIGGRMVKWLKRIIVTTPESESYYHFKDNRVLPSHVDAELANSEGWWYKPEYIINELNINSVITTPCHEEILPINSWTTQRPYTLRGYAYSGGGKKVTRVEVTMDGGETWNVCTLDHKEKPTRYAKYWCWCFWSLEVEVLDLLSAKEIAVRAWDETLNTQPDKLIWNLMGMMNNCWFRVKTNMCKPHKGEIGIVFEHPTQPGNQSGGWMAREKHLEISSELAHPTLKKSVSSPFMNTTSLTFTMSEVKKHNSADSAWIVVHGHIYDCTSFLKDHPGGSDSILLNAGTDCTEEFDAIHSDKAKKLLEEYRVGELITMGYSSDSAASSPNNSVHGATNYLTLHLSLATIKEIAPTRSVALIPKEIAPTRREKIPCKLISKTSVSHDVRLFRFALPSPDQVLGLPVGKHVFVCATIDDKLCMRAYTPTSTIDEVGYFELLVKIYFKGVEPKFPNGGLMSQHLESMELGSSIEIKGPLGHIEYMGRGTFSVHGKQKFARKLAMFAGGTGITPDLSSDASYLKDPEDDTEMYVVYANRTEDDILLREELDAWADKYSDRVKVWYVVAKSIREGWKYSEGFITEDIMREHVPEVSEDTLALACGPPPMIQFAINPNLEKMGYDIKNSLLVF.

The tract at residues 1–69 (MAASVENRQF…DTSDDEEDEA (69 aa)) is disordered. Over residues 60–69 (DTSDDEEDEA) the composition is skewed to acidic residues. Cysteine 185 contributes to the Mo-molybdopterin binding site. The Cytochrome b5 heme-binding domain occupies 534–609 (SLTFTMSEVK…LEEYRVGELI (76 aa)). Heme is bound by residues histidine 569 and histidine 592. An FAD-binding FR-type domain is found at 663-775 (REKIPCKLIS…KGPLGHIEYM (113 aa)). FAD contacts are provided by residues 715-718 (RAYT), 732-736 (LVKIY), phenylalanine 737, phenylalanine 744, 749-751 (LMS), and threonine 802.

The protein belongs to the nitrate reductase family. In terms of assembly, homodimer. It depends on FAD as a cofactor. Requires heme as cofactor. Mo-molybdopterin is required as a cofactor. In terms of tissue distribution, in cortical cells of roots grown at low nitrate concentrations, in vascular tissues of roots at high nitrate concentrations and in root apex under both conditions.

The enzyme catalyses nitrite + NAD(+) + H2O = nitrate + NADH + H(+). Functionally, nitrate reductase is a key enzyme involved in the first step of nitrate assimilation in plants, fungi and bacteria. The sequence is that of Nitrate reductase [NADH] (NIA) from Cichorium intybus (Chicory).